The chain runs to 358 residues: UDP-N-acetylglucosamine--N-acetylmuramyl-(pentapeptide) pyrophosphoryl-undecaprenol N-acetylglucosamine transferase (358 aa).

UDP-N-acetyl-alpha-D-glucosamine is bound by residues 13 to 15, R166, S196, and Q291; that span reads TAG.

This sequence belongs to the glycosyltransferase 28 family. MurG subfamily.

It localises to the cell membrane. It carries out the reaction di-trans,octa-cis-undecaprenyl diphospho-N-acetyl-alpha-D-muramoyl-L-alanyl-D-glutamyl-meso-2,6-diaminopimeloyl-D-alanyl-D-alanine + UDP-N-acetyl-alpha-D-glucosamine = di-trans,octa-cis-undecaprenyl diphospho-[N-acetyl-alpha-D-glucosaminyl-(1-&gt;4)]-N-acetyl-alpha-D-muramoyl-L-alanyl-D-glutamyl-meso-2,6-diaminopimeloyl-D-alanyl-D-alanine + UDP + H(+). It functions in the pathway cell wall biogenesis; peptidoglycan biosynthesis. Cell wall formation. Catalyzes the transfer of a GlcNAc subunit on undecaprenyl-pyrophosphoryl-MurNAc-pentapeptide (lipid intermediate I) to form undecaprenyl-pyrophosphoryl-MurNAc-(pentapeptide)GlcNAc (lipid intermediate II). In Clostridium botulinum (strain Alaska E43 / Type E3), this protein is UDP-N-acetylglucosamine--N-acetylmuramyl-(pentapeptide) pyrophosphoryl-undecaprenol N-acetylglucosamine transferase.